Consider the following 140-residue polypeptide: Nucleoside diphosphate kinase (140 aa).

Residues Lys11, Phe59, Arg87, Thr93, Arg104, and Asn114 each coordinate ATP. Residue His117 is the Pros-phosphohistidine intermediate of the active site.

The protein belongs to the NDK family. As to quaternary structure, homotetramer. Requires Mg(2+) as cofactor.

Its subcellular location is the cytoplasm. It carries out the reaction a 2'-deoxyribonucleoside 5'-diphosphate + ATP = a 2'-deoxyribonucleoside 5'-triphosphate + ADP. The catalysed reaction is a ribonucleoside 5'-diphosphate + ATP = a ribonucleoside 5'-triphosphate + ADP. Its function is as follows. Major role in the synthesis of nucleoside triphosphates other than ATP. The ATP gamma phosphate is transferred to the NDP beta phosphate via a ping-pong mechanism, using a phosphorylated active-site intermediate. This Beijerinckia indica subsp. indica (strain ATCC 9039 / DSM 1715 / NCIMB 8712) protein is Nucleoside diphosphate kinase.